Reading from the N-terminus, the 787-residue chain is Exocyst complex component SEC15B (787 aa).

This sequence belongs to the SEC15 family. The exocyst complex is composed of SEC3, SEC5, SEC6, SEC8, SEC10, EXO70A1 and EXO84B. Interacts with EXO84B. Binds to EXO70H1 AND EXO70B2. Binds directly to B1L.

It is found in the cytoplasm. The protein localises to the cytosol. Its subcellular location is the cytoskeleton. It localises to the phragmoplast. The protein resides in the secreted. It is found in the cell wall. The protein localises to the extracellular exosome. Functionally, component of the exocyst complex involved in the docking of exocytic vesicles with fusion sites on the plasma membrane during regulated or polarized secretion. Involved in polarized cell growth and organ morphogenesis. During cytokinesis, involved in cell plate initiation, cell plate maturation and formation of new primary cell wall. The polypeptide is Exocyst complex component SEC15B (Arabidopsis thaliana (Mouse-ear cress)).